The sequence spans 81 residues: Saposin-C (81 aa).

In terms of domain architecture, Saposin B-type spans 1–81 (ESVTCKACEY…CSELGLCMSG (81 aa)). 3 disulfide bridges follow: cysteine 5-cysteine 78, cysteine 8-cysteine 72, and cysteine 36-cysteine 47. Asparagine 22 carries an N-linked (GlcNAc...) asparagine glycan.

In terms of biological role, saposin-A and saposin-C stimulate the hydrolysis of glucosylceramide by beta-glucosylceramidase (EC 3.2.1.45) and galactosylceramide by beta-galactosylceramidase (EC 3.2.1.46). Saposin-C apparently acts by combining with the enzyme and acidic lipid to form an activated complex, rather than by solubilizing the substrate. In Cavia porcellus (Guinea pig), this protein is Saposin-C (PSAP).